The chain runs to 381 residues: Creatine kinase M-type (381 aa).

Positions 11-98 (KLNYKPEEEY…FDPIIQDRHG (88 aa)) constitute a Phosphagen kinase N-terminal domain. The Phosphagen kinase C-terminal domain occupies 125-367 (YVLSSRVRTG…KLMVEMEKKL (243 aa)). 128 to 132 (SSRVR) is a binding site for ATP. Ser-164 carries the phosphoserine modification. Thr-166 carries the phosphothreonine modification. Ser-178 carries the phosphoserine modification. The residue at position 180 (Thr-180) is a Phosphothreonine. His-191 contacts ATP. Phosphoserine is present on Ser-199. Residues Arg-236 and Arg-292 each contribute to the ATP site. A phosphothreonine mark is found at Thr-313 and Thr-322. ATP contacts are provided by residues 320 to 325 (RGTGGV) and Asp-335. Ser-372 carries the post-translational modification Phosphoserine.

The protein belongs to the ATP:guanido phosphotransferase family. In terms of assembly, dimer of identical or non-identical chains, which can be either B (brain type) or M (muscle type). With MM being the major form in skeletal muscle and myocardium, MB existing in myocardium, and BB existing in many tissues, especially brain.

It localises to the cytoplasm. The enzyme catalyses creatine + ATP = N-phosphocreatine + ADP + H(+). In terms of biological role, reversibly catalyzes the transfer of phosphate between ATP and various phosphogens (e.g. creatine phosphate). Creatine kinase isoenzymes play a central role in energy transduction in tissues with large, fluctuating energy demands, such as skeletal muscle, heart, brain and spermatozoa. The sequence is that of Creatine kinase M-type (CKM) from Canis lupus familiaris (Dog).